A 248-amino-acid chain; its full sequence is 14-3-3 protein zeta (248 aa).

It belongs to the 14-3-3 family. As to quaternary structure, homodimer; homodimerization is not essential for modulating the activity of Slo. Interacts with phosphorylated Slob; the interaction with Slob mediates an indirect interaction with Slo. Interacts with phosphorylated yki. Interacts with hemo; this represses 14-3-3zeta activity which prevents the 14-3-3zeta-mediated activation of phosphoinositide 3-kinase Pi3K68D. This, in turn, inhibits the Pi3K68D-mediated conversion of phosphatidylinositol to phosphatidylinositol-3-phosphate and prevents progression of early endosomes through the maturation process which regulates subsequent steps of phagocytic processing. Interacts with REPTOR (when phosphorylated), this interaction may assist the cytoplasmic retention of REPTOR. Predominantly expressed in the ventral nerve cord of the embryo, and in the neural tissues of the head. Also found in the region posterior to the morphogenetic furrow of the eye imaginal disk where cells differentiate as photoreceptors.

The protein localises to the cytoplasm. It localises to the early endosome. Its function is as follows. Required in Raf-dependent cell proliferation and photoreceptor differentiation during eye development. Acts upstream of Raf and downstream of Ras, and is essential for viability. Acts as a negative regulator of the slo calcium channel via its interaction with slo-binding protein slob. Inhibits yki activity by restricting its nuclear localization. Binds to and promotes the activity of phosphoinositide 3-kinase Pi3K68D which converts phosphatidylinositol to phosphatidylinositol-3-phosphate and promotes maturation of early endosomes. The polypeptide is 14-3-3 protein zeta (14-3-3zeta) (Drosophila melanogaster (Fruit fly)).